Consider the following 1183-residue polypeptide: Chromosome partition protein Smc (1183 aa).

Residue 32-39 (PNGCGKTN) coordinates ATP. Coiled-coil stretches lie at residues 167–322 (ITRY…ERLN) and 358–497 (AEFE…ALCN). The tract at residues 409-442 (KEHLEGSVNRLDQRKRDLERSMEQAEPERRRTSE) is disordered. Residues 419 to 442 (LDQRKRDLERSMEQAEPERRRTSE) are compositionally biased toward basic and acidic residues. Residues 523–632 (LGCLSDLISV…VADLDAAEQL (110 aa)) form the SMC hinge domain. 2 coiled-coil regions span residues 669-941 (GKKA…VMER) and 980-1025 (NELA…ALEK).

Belongs to the SMC family. As to quaternary structure, homodimer.

The protein resides in the cytoplasm. Functionally, required for chromosome condensation and partitioning. The protein is Chromosome partition protein Smc of Chlorobaculum tepidum (strain ATCC 49652 / DSM 12025 / NBRC 103806 / TLS) (Chlorobium tepidum).